The chain runs to 175 residues: 6,7-dimethyl-8-ribityllumazine synthase (175 aa).

5-amino-6-(D-ribitylamino)uracil-binding positions include F24, 58–60 (ALE), and 82–84 (AVI). (2S)-2-hydroxy-3-oxobutyl phosphate is bound at residue 87–88 (ET). H90 functions as the Proton donor in the catalytic mechanism. N115 lines the 5-amino-6-(D-ribitylamino)uracil pocket. R129 provides a ligand contact to (2S)-2-hydroxy-3-oxobutyl phosphate. Positions 150–175 (ALEPEEDDEDEDDEDEDFDDEEDDGR) are disordered. Positions 152 to 175 (EPEEDDEDEDDEDEDFDDEEDDGR) are enriched in acidic residues.

This sequence belongs to the DMRL synthase family.

It carries out the reaction (2S)-2-hydroxy-3-oxobutyl phosphate + 5-amino-6-(D-ribitylamino)uracil = 6,7-dimethyl-8-(1-D-ribityl)lumazine + phosphate + 2 H2O + H(+). It participates in cofactor biosynthesis; riboflavin biosynthesis; riboflavin from 2-hydroxy-3-oxobutyl phosphate and 5-amino-6-(D-ribitylamino)uracil: step 1/2. Functionally, catalyzes the formation of 6,7-dimethyl-8-ribityllumazine by condensation of 5-amino-6-(D-ribitylamino)uracil with 3,4-dihydroxy-2-butanone 4-phosphate. This is the penultimate step in the biosynthesis of riboflavin. The chain is 6,7-dimethyl-8-ribityllumazine synthase from Bordetella bronchiseptica (strain ATCC BAA-588 / NCTC 13252 / RB50) (Alcaligenes bronchisepticus).